The chain runs to 400 residues: Nicotinate phosphoribosyltransferase (400 aa).

Histidine 220 is subject to Phosphohistidine; by autocatalysis.

This sequence belongs to the NAPRTase family. Post-translationally, transiently phosphorylated on a His residue during the reaction cycle. Phosphorylation strongly increases the affinity for substrates and increases the rate of nicotinate D-ribonucleotide production. Dephosphorylation regenerates the low-affinity form of the enzyme, leading to product release.

It carries out the reaction nicotinate + 5-phospho-alpha-D-ribose 1-diphosphate + ATP + H2O = nicotinate beta-D-ribonucleotide + ADP + phosphate + diphosphate. It participates in cofactor biosynthesis; NAD(+) biosynthesis; nicotinate D-ribonucleotide from nicotinate: step 1/1. Catalyzes the synthesis of beta-nicotinate D-ribonucleotide from nicotinate and 5-phospho-D-ribose 1-phosphate at the expense of ATP. This chain is Nicotinate phosphoribosyltransferase, found in Shigella dysenteriae serotype 1 (strain Sd197).